The sequence spans 250 residues: Green-light absorbing proteorhodopsin (250 aa).

The first 18 residues, Met-1–Ala-18, serve as a signal peptide directing secretion. Residues Ala-19–Tyr-29 are Extracellular-facing. Residues Thr-30–Asp-53 traverse the membrane as a helical segment. The Cytoplasmic portion of the chain corresponds to Arg-54 to Lys-58. Residues Trp-59 to Thr-87 traverse the membrane as a helical segment. At Gly-88–Ser-90 the chain is on the extracellular side. A helical membrane pass occupies residues Pro-91–Thr-118. The Cytoplasmic segment spans residues Asn-119–Ala-121. The chain crosses the membrane as a helical span at residues Gly-122–Ala-144. Over Gly-145 to Met-147 the chain is Extracellular. The chain crosses the membrane as a helical span at residues Ala-148–Asn-177. Topologically, residues Thr-178–Ser-180 are cytoplasmic. The chain crosses the membrane as a helical span at residues Pro-181–Gly-208. Over Tyr-209 to Leu-218 the chain is Extracellular. A helical membrane pass occupies residues Asn-219–Asn-249. Position 232 is an N6-(retinylidene)lysine (Lys-232). Position 250 (Ala-250) is a topological domain, cytoplasmic.

The protein belongs to the archaeal/bacterial/fungal opsin family. As to quaternary structure, homopentamer. GPR protomers assemble into a pentamer around a central pore with a C5 symmetry axis. Contains one covalently linked retinal chromophore per subunit.

It is found in the cell membrane. Its function is as follows. Light-driven proton pump. This is Green-light absorbing proteorhodopsin from Unknown prokaryotic organism.